Here is a 326-residue protein sequence, read N- to C-terminus: Endochitinase (326 aa).

The N-terminal stretch at 1–25 (MVYCTASLPLLLLLLVGLLAGEAFA) is a signal peptide. The Chitin-binding type-1 domain maps to 26 to 66 (EQCGRQAGGALCPGGLCCSQFGWCGSTSDYCGPTCQSQCGG). 7 cysteine pairs are disulfide-bonded: cysteine 28/cysteine 43, cysteine 37/cysteine 49, cysteine 42/cysteine 56, cysteine 60/cysteine 64, cysteine 96/cysteine 158, cysteine 170/cysteine 178, and cysteine 277/cysteine 309. Glutamate 140 acts as the Proton donor in catalysis.

This sequence belongs to the glycosyl hydrolase 19 family. Chitinase class I subfamily. In terms of tissue distribution, expressed in the pulp of the fruit (at protein level). Expressed in mesocarp (at protein level).

The enzyme catalyses Random endo-hydrolysis of N-acetyl-beta-D-glucosaminide (1-&gt;4)-beta-linkages in chitin and chitodextrins.. Its function is as follows. Defense against chitin-containing fungal pathogens. Has in vitro antifungal activity against F.oxysporum inhibiting its growth and the branching of its hyphae. Has endochitinase activity, but no exochitinase or lysozyme activities. The protein is Endochitinase of Persea americana (Avocado).